Reading from the N-terminus, the 396-residue chain is Orotidine 5'-phosphate decarboxylase (396 aa).

Residues Asp46, 68–70, 103–112, Tyr346, and Arg365 each bind substrate; these read KTH and DRKFVDIGST. Lys105 serves as the catalytic Proton donor.

The protein belongs to the OMP decarboxylase family.

The catalysed reaction is orotidine 5'-phosphate + H(+) = UMP + CO2. It functions in the pathway pyrimidine metabolism; UMP biosynthesis via de novo pathway; UMP from orotate: step 2/2. This chain is Orotidine 5'-phosphate decarboxylase (URA3), found in Sordaria macrospora (strain ATCC MYA-333 / DSM 997 / K(L3346) / K-hell).